Here is a 253-residue protein sequence, read N- to C-terminus: MNRYDRAITIFSPDGHLFQVEYAQEAVKKGSTAVGVRGKDCIVIGVEKKSIPALQDDRTIRKIHMIDDHVMLAFAGLSADARVLVDRARIECQSYKLTLEDPVTVAYISRYIANTKQRFTQSPGRRPFGISMLIGGFDHDGTPRLFKTEPSGAYYEYVANATGRGEKPVREYLEEQYSEENTVDEATTLKLVVKSLAQVVPPGSQNIEIAVMKKVNDELQQRVLSTEEIEALLKVVETERVAAEAEEAASKKK.

This sequence belongs to the peptidase T1A family. The 26S proteasome consists of a 20S proteasome core and two 19S regulatory subunits. The 20S proteasome core is composed of 28 subunits that are arranged in four stacked rings, resulting in a barrel-shaped structure. The two end rings are each formed by seven alpha subunits, and the two central rings are each formed by seven beta subunits. The catalytic chamber with the active sites is on the inside of the barrel.

Its subcellular location is the cytoplasm. The protein resides in the nucleus. The proteasome is a multicatalytic proteinase complex which is characterized by its ability to cleave peptides with Arg, Phe, Tyr, Leu, and Glu adjacent to the leaving group at neutral or slightly basic pH. The proteasome has an ATP-dependent proteolytic activity. In Caenorhabditis elegans, this protein is Proteasome subunit alpha type-7 (pas-4).